Reading from the N-terminus, the 280-residue chain is Cis-2,3-dihydrobiphenyl-2,3-diol dehydrogenase (280 aa).

Residue 9 to 33 (LVTGGCAGLGRAIVDRFVCEGARVA) coordinates NAD(+). Substrate is bound at residue Ser142. The active-site Proton acceptor is Tyr155.

It belongs to the short-chain dehydrogenases/reductases (SDR) family.

The catalysed reaction is (2R,3S)-3-phenylcyclohexa-3,5-diene-1,2-diol + NAD(+) = biphenyl-2,3-diol + NADH + H(+). Its pathway is xenobiotic degradation; biphenyl degradation; 2-hydroxy-2,4-pentadienoate and benzoate from biphenyl: step 2/4. This chain is Cis-2,3-dihydrobiphenyl-2,3-diol dehydrogenase (bphB), found in Rhodococcus globerulus.